A 719-amino-acid chain; its full sequence is Leucine-rich repeat and fibronectin type-III domain-containing protein 5 (719 aa).

An N-terminal signal peptide occupies residues 1-17 (MEKILFYLFLIGIAVKA). The 34-residue stretch at 18 to 51 (QICPKRCVCQILSPNLATLCAKKGLLFVPPNIDR) folds into the LRRNT domain. The Extracellular portion of the chain corresponds to 18–529 (QICPKRCVCQ…MQSQFLGGTM (512 aa)). 7 LRR repeats span residues 52–73 (RTVELRLADNFVTNIKRKDFAN), 76–97 (SLVDLTLSRNTISFITPHAFAD), 100–121 (NLRALHLNSNRLTKITNDMFSG), 124–145 (NLHHLILNNNQLTLISSTAFDD), 148–169 (ALEELDLSYNNLETIPWDAVEK), 172–193 (SLHTLSLDHNMIDNIPKGTFSH), and 196–217 (KMTRLDVTSNKLQKLPPDPLFQ). N-linked (GlcNAc...) asparagine glycosylation is present at N73. Positions 240–286 (NPLHCNCELLWLRRLSREDDLETCASPPLLTGRYFWSIPEEEFLCEP) constitute an LRRCT domain. One can recognise an Ig-like domain in the interval 287–373 (PLITRHTHEM…GEATQIVDLH (87 aa)). The cysteines at positions 308 and 357 are disulfide-linked. 5 N-linked (GlcNAc...) asparagine glycosylation sites follow: N330, N339, N382, N406, and N452. The segment at 385 to 414 (NHIHEPDPGSSDISTSTKSGSNTSSSNGDT) is disordered. Residues 393-414 (GSSDISTSTKSGSNTSSSNGDT) show a composition bias toward low complexity. Residues 414 to 503 (TKLSQDKIVV…ITSLTATRVV (90 aa)) form the Fibronectin type-III domain. Residues 530-550 (IIIIGGIIVASVLVFIIILMI) form a helical membrane-spanning segment. Over 551-719 (RYKVCNNNGQ…VQETQRLELI (169 aa)) the chain is Cytoplasmic. Residues 615 to 627 (ETCSSQDSSTTTS) show a composition bias toward low complexity. The tract at residues 615 to 694 (ETCSSQDSST…SVTEGPTSKR (80 aa)) is disordered. Composition is skewed to polar residues over residues 628 to 641 (ALPPSWTSSTSVSQ) and 649 to 677 (TKPSTEPQNEAVTNVESQNTNRNNSTALQ).

Belongs to the LRFN family. In terms of assembly, can form heteromeric complexes with LRFN1, LRFN2, LRFN3 and LFRN4. Able to form homomeric complexes across cell junctions, between adjacent cells. Does not interact with DLG1, DLG2, DLG3 and DLG4.

The protein resides in the membrane. Cell adhesion molecule that mediates homophilic cell-cell adhesion in a Ca(2+)-independent manner. Promotes neurite outgrowth in hippocampal neurons. This is Leucine-rich repeat and fibronectin type-III domain-containing protein 5 (LRFN5) from Homo sapiens (Human).